Here is a 342-residue protein sequence, read N- to C-terminus: Phosphoribosylformylglycinamidine cyclo-ligase (342 aa).

Belongs to the AIR synthase family.

Its subcellular location is the cytoplasm. The catalysed reaction is 2-formamido-N(1)-(5-O-phospho-beta-D-ribosyl)acetamidine + ATP = 5-amino-1-(5-phospho-beta-D-ribosyl)imidazole + ADP + phosphate + H(+). The protein operates within purine metabolism; IMP biosynthesis via de novo pathway; 5-amino-1-(5-phospho-D-ribosyl)imidazole from N(2)-formyl-N(1)-(5-phospho-D-ribosyl)glycinamide: step 2/2. In Staphylococcus aureus (strain MSSA476), this protein is Phosphoribosylformylglycinamidine cyclo-ligase.